We begin with the raw amino-acid sequence, 393 residues long: DNA polymerase processivity factor (393 aa).

3 disordered regions span residues 25–50 (EMERGSRDHHRDHRDHREHRETREPP), 311–339 (ESRFERMGKQDDGKGDRSHKNDDGSALAS), and 355–393 (KNGTAGSSLFNEKEDSESDDSMHFDYSSNPNPKRQRCVV). Residues 31 to 41 (RDHHRDHRDHR) show a composition bias toward basic residues. Basic and acidic residues predominate over residues 311–333 (ESRFERMGKQDDGKGDRSHKNDD).

Belongs to the herpesviridae polymerase accessory protein family.

Its function is as follows. Accessory subunit of the DNA polymerase that acts to increase the processivity of polymerization. This chain is DNA polymerase processivity factor (U27), found in Human herpesvirus 6A (strain Uganda-1102) (HHV-6 variant A).